We begin with the raw amino-acid sequence, 382 residues long: Homoserine O-acetyltransferase (382 aa).

The region spanning Asn-52 to Glu-356 is the AB hydrolase-1 domain. The active-site Nucleophile is the Ser-157. Arg-227 serves as a coordination point for substrate. Residues Asp-320 and His-350 contribute to the active site. Residue Asp-351 participates in substrate binding.

The protein belongs to the AB hydrolase superfamily. MetX family. In terms of assembly, homodimer.

Its subcellular location is the cytoplasm. The enzyme catalyses L-homoserine + acetyl-CoA = O-acetyl-L-homoserine + CoA. It functions in the pathway amino-acid biosynthesis; L-methionine biosynthesis via de novo pathway; O-acetyl-L-homoserine from L-homoserine: step 1/1. Functionally, transfers an acetyl group from acetyl-CoA to L-homoserine, forming acetyl-L-homoserine. The protein is Homoserine O-acetyltransferase of Mycobacterium leprae (strain TN).